A 509-amino-acid polypeptide reads, in one-letter code: 2,3-bisphosphoglycerate-independent phosphoglycerate mutase (509 aa).

Residue D11 participates in Mn(2+) binding. Y35 is modified (phosphotyrosine). A Mn(2+)-binding site is contributed by S61. Catalysis depends on S61, which acts as the Phosphoserine intermediate. Substrate contacts are provided by residues H122, 152 to 153 (RD), R184, R190, 260 to 263 (RPDR), and K335. Residues D402, H406, D443, H444, and H461 each contribute to the Mn(2+) site.

This sequence belongs to the BPG-independent phosphoglycerate mutase family. In terms of assembly, monomer. Requires Mn(2+) as cofactor.

It carries out the reaction (2R)-2-phosphoglycerate = (2R)-3-phosphoglycerate. The protein operates within carbohydrate degradation; glycolysis; pyruvate from D-glyceraldehyde 3-phosphate: step 3/5. Essential for rapid growth and for sporulation. Catalyzes the interconversion of 2-phosphoglycerate and 3-phosphoglycerate. The sequence is that of 2,3-bisphosphoglycerate-independent phosphoglycerate mutase from Bacillus thuringiensis (strain Al Hakam).